A 121-amino-acid chain; its full sequence is UPF0102 protein BT_2236 (121 aa).

This sequence belongs to the UPF0102 family.

This Bacteroides thetaiotaomicron (strain ATCC 29148 / DSM 2079 / JCM 5827 / CCUG 10774 / NCTC 10582 / VPI-5482 / E50) protein is UPF0102 protein BT_2236.